The chain runs to 277 residues: 4-diphosphocytidyl-2-C-methyl-D-erythritol kinase (277 aa).

Residue K9 is part of the active site. An ATP-binding site is contributed by 91–101; sequence PMGAGLGGGSS. The active site involves D133.

This sequence belongs to the GHMP kinase family. IspE subfamily.

It carries out the reaction 4-CDP-2-C-methyl-D-erythritol + ATP = 4-CDP-2-C-methyl-D-erythritol 2-phosphate + ADP + H(+). It functions in the pathway isoprenoid biosynthesis; isopentenyl diphosphate biosynthesis via DXP pathway; isopentenyl diphosphate from 1-deoxy-D-xylulose 5-phosphate: step 3/6. Catalyzes the phosphorylation of the position 2 hydroxy group of 4-diphosphocytidyl-2C-methyl-D-erythritol. In Acinetobacter baumannii (strain AB307-0294), this protein is 4-diphosphocytidyl-2-C-methyl-D-erythritol kinase.